Consider the following 77-residue polypeptide: Defensin-like protein 91 (77 aa).

An N-terminal signal peptide occupies residues 1–27 (METKKISYFLLPSLMIVALIFQPMCSA). Intrachain disulfides connect cysteine 38/cysteine 75, cysteine 43/cysteine 64, cysteine 49/cysteine 73, and cysteine 53/cysteine 74.

It belongs to the DEFL family.

The protein resides in the secreted. This is Defensin-like protein 91 (LCR47) from Arabidopsis thaliana (Mouse-ear cress).